An 820-amino-acid polypeptide reads, in one-letter code: Leucine-rich repeat and guanylate kinase domain-containing protein (820 aa).

Residues 72-83 are compositionally biased toward basic and acidic residues; sequence EAEAEQEEKQQE. Positions 72 to 96 are disordered; the sequence is EAEAEQEEKQQEDGESEESEESEMQ. Acidic residues predominate over residues 84–94; that stretch reads DGESEESEESE. LRR repeat units follow at residues 129–149, 150–171, 172–193, 194–215, 216–237, 238–259, 260–280, 281–302, and 303–324; these read YLNL…CGYV, HLQK…SCMP, YLLE…KPPQ, NLKK…SAYH, TLTQ…ENCI, SLTH…GTLP, IKVL…EELK, ALQN…ENHD, and LLEV…EYIE. The LRRCT domain maps to 337–375; it reads NPIQTKPEYWFFVIYMLLRLTELDQQKIKVEEKVFAVNK. One can recognise a Guanylate kinase-like domain in the interval 414–597; the sequence is YPMLILTGPA…AYQKLSELIR (184 aa). Residue 421–428 participates in ATP binding; that stretch reads GPAACGKR. Residues 800 to 820 are disordered; the sequence is TIMDPGSNTKPTLPPIPHGRR. The span at 811–820 shows a compositional bias: pro residues; that stretch reads TLPPIPHGRR.

Interacts (via guanylate kinase-like domain) with RIMBP3 (via coiled-coil region). Interacts (via guanylate kinase-like domain) with HOOK2. Interacts (via LRRCT domain) with KLC3. Interacts with HOOK1 and HOOK3. As to expression, highly expressed in the testis. During spermatid development is initially localized to a supra-nuclear region of round spermatids, and is particularly evident at the leading edge of the developing acrosome and acroplaxome. As maturation proceeded and nuclear elongation initiated, LRGUK moves distally to ultimately reside on the microtubules of the manchette. LRGUK is also evident in the sperm basal body and the sperm tail.

Its subcellular location is the cytoplasmic vesicle. It localises to the secretory vesicle. The protein localises to the acrosome. The protein resides in the cytoplasm. It is found in the cytoskeleton. Its subcellular location is the cilium basal body. Involved in multiple aspects of sperm assembly including acrosome attachment, shaping of the sperm head and in the early aspects of axoneme development. Not essential for primary cilium biogenesis. This is Leucine-rich repeat and guanylate kinase domain-containing protein (Lrguk) from Mus musculus (Mouse).